We begin with the raw amino-acid sequence, 215 residues long: Fanconi anemia core complex-associated protein 24 (215 aa).

In terms of assembly, belongs to the multisubunit FA complex composed of FANCA, FANCB, FANCC, FANCE, FANCF, FANCG, FANCL/PHF9, FANCM and FAAP24. Interacts with FANCM.

Its subcellular location is the nucleus. Plays a role in DNA repair through recruitment of the FA core complex to damaged DNA. Regulates FANCD2 monoubiquitination upon DNA damage. Induces chromosomal instability as well as hypersensitivity to DNA cross-linking agents, when repressed. Targets FANCM/FAAP24 complex to the DNA, preferentially to single strand DNA. This is Fanconi anemia core complex-associated protein 24 from Bos taurus (Bovine).